The sequence spans 355 residues: uncharacterized protein (355 aa).

An ATP-binding site is contributed by 132 to 139; it reads GPPGCGKT.

It belongs to the AAA ATPase family.

Its subcellular location is the mitochondrion. This is an uncharacterized protein from Schizosaccharomyces pombe (strain 972 / ATCC 24843) (Fission yeast).